A 160-amino-acid chain; its full sequence is Nuclear transcription factor Y subunit B-5 (160 aa).

Residues 56 to 62 (LPIANVG) mediate DNA binding. Positions 83-94 (MQECVSEFISFV) are subunit association domain (SAD).

It belongs to the NFYB/HAP3 subunit family. Heterotrimeric transcription factor composed of three components, NF-YA, NF-YB and NF-YC. NF-YB and NF-YC must interact and dimerize for NF-YA association and DNA binding. As to expression, expressed in flowers and siliques.

The protein localises to the nucleus. Functionally, component of the NF-Y/HAP transcription factor complex. The NF-Y complex stimulates the transcription of various genes by recognizing and binding to a CCAAT motif in promoters. This is Nuclear transcription factor Y subunit B-5 (NFYB5) from Arabidopsis thaliana (Mouse-ear cress).